A 343-amino-acid chain; its full sequence is Phosphoribosylformylglycinamidine cyclo-ligase (343 aa).

This sequence belongs to the AIR synthase family.

The protein localises to the cytoplasm. It catalyses the reaction 2-formamido-N(1)-(5-O-phospho-beta-D-ribosyl)acetamidine + ATP = 5-amino-1-(5-phospho-beta-D-ribosyl)imidazole + ADP + phosphate + H(+). The protein operates within purine metabolism; IMP biosynthesis via de novo pathway; 5-amino-1-(5-phospho-D-ribosyl)imidazole from N(2)-formyl-N(1)-(5-phospho-D-ribosyl)glycinamide: step 2/2. This is Phosphoribosylformylglycinamidine cyclo-ligase from Enterococcus faecalis (strain ATCC 700802 / V583).